Here is a 227-residue protein sequence, read N- to C-terminus: 7-cyano-7-deazaguanine synthase (227 aa).

16–26 serves as a coordination point for ATP; sequence FSGGQDSTTCL. Positions 194, 202, 205, and 208 each coordinate Zn(2+).

The protein belongs to the QueC family. Requires Zn(2+) as cofactor.

It carries out the reaction 7-carboxy-7-deazaguanine + NH4(+) + ATP = 7-cyano-7-deazaguanine + ADP + phosphate + H2O + H(+). It functions in the pathway purine metabolism; 7-cyano-7-deazaguanine biosynthesis. Functionally, catalyzes the ATP-dependent conversion of 7-carboxy-7-deazaguanine (CDG) to 7-cyano-7-deazaguanine (preQ(0)). The sequence is that of 7-cyano-7-deazaguanine synthase from Haemophilus influenzae (strain 86-028NP).